A 300-amino-acid chain; its full sequence is Merozoite surface protein 2 (300 aa).

Positions 1–20 are cleaved as a signal peptide; it reads MKVIKTLSIINFFIFVTFNI. N-linked (GlcNAc...) asparagine glycosylation is found at Asn22 and Asn36. The tract at residues 44–226 is polymorphic region; sequence EESKPPTGAV…EQTESPELQS (183 aa). The 1; inverted repeat unit spans residues 51–58; sequence GAVAGSGA. The 7 X 8 AA tandem repeats of G-S-G-A-G-A-V-A stretch occupies residues 51–74; it reads GAVAGSGAGAGSGAGAVAGSGAGA. 5 consecutive repeat copies span residues 61–68, 69–76, 77–84, 85–92, and 93–100. A 7; inverted repeat occupies 103-110; sequence GAVAGSGA. The interval 111–261 is disordered; the sequence is GNGANPGADA…DSQKECTDGN (151 aa). Positions 124 to 148 are enriched in low complexity; that stretch reads PSTPATTTTTTTTNDAEASTSTSSE. Basic and acidic residues predominate over residues 149–165; the sequence is NRNHNNAETNPKGKGEV. Polar residues-rich tracts occupy residues 167-193 and 200-228; these read KPNQANKETQNNSNVQQDSQTKSNVPR and KSPTAQPEQAENSAPTAEQTESPELQSAP. Asn177 carries N-linked (GlcNAc...) asparagine glycosylation. Residue Asn249 is glycosylated (N-linked (GlcNAc...) asparagine). Cys257 and Cys265 are oxidised to a cystine. N-linked (GlcNAc...) asparagine glycans are attached at residues Asn273 and Asn274. Asn274 carries the GPI-anchor amidated asparagine lipid modification. Positions 275 to 300 are cleaved as a propeptide — removed in mature form; sequence SSNIASINKFVVLISATLVLSFAIFI.

It is found in the cell membrane. Functionally, may play a role in the merozoite attachment to the erythrocyte. The sequence is that of Merozoite surface protein 2 from Plasmodium falciparum (isolate mad71 / Papua New Guinea).